We begin with the raw amino-acid sequence, 238 residues long: Small ribosomal subunit protein uS2 (238 aa).

This sequence belongs to the universal ribosomal protein uS2 family.

The chain is Small ribosomal subunit protein uS2 from Haemophilus ducreyi (strain 35000HP / ATCC 700724).